A 490-amino-acid polypeptide reads, in one-letter code: COP9 signalosome complex subunit 2 (490 aa).

A compositionally biased stretch (acidic residues) spans 1–30 (MSDDDFMQDSDQEYDFEYEDDEEEDTGDVD). Residues 1-32 (MSDDDFMQDSDQEYDFEYEDDEEEDTGDVDIE) are disordered. The 169-residue stretch at 250–418 (SEENWKEAQS…GVLELESRED (169 aa)) folds into the PCI domain. The interval 469 to 490 (DTMRSMGSGKRGRRVGLTQRAY) is disordered.

It belongs to the CSN2 family. In terms of assembly, component of the COP9 signalosome (CSN) complex.

Its subcellular location is the cytoplasm. The protein resides in the nucleus. Component of the COP9 signalosome (CSN) complex that acts as an regulator of the ubiquitin (Ubl) conjugation pathway by mediating the deneddylation of the cullin subunit of SCF-type E3 ubiquitin-protein ligase complexes. The CSN complex is involved in the regulation of the circadian clock through its control of the stability of the SCF(FWD-1) complex. The protein is COP9 signalosome complex subunit 2 (csn-2) of Neurospora crassa (strain ATCC 24698 / 74-OR23-1A / CBS 708.71 / DSM 1257 / FGSC 987).